The chain runs to 591 residues: V-type ATP synthase alpha chain (591 aa).

233-240 (GPFGAGKT) provides a ligand contact to ATP.

Belongs to the ATPase alpha/beta chains family.

The catalysed reaction is ATP + H2O + 4 H(+)(in) = ADP + phosphate + 5 H(+)(out). Functionally, produces ATP from ADP in the presence of a proton gradient across the membrane. The V-type alpha chain is a catalytic subunit. This Streptococcus pyogenes serotype M49 (strain NZ131) protein is V-type ATP synthase alpha chain.